The sequence spans 222 residues: Putative germin-like protein 3-2 (222 aa).

Positions 1–22 (MAKLILATFAVVFLALAATSLA) are cleaved as a signal peptide. A disulfide bridge connects residues Cys32 and Cys50. Residues Asn55 and Asn71 are each glycosylated (N-linked (GlcNAc...) asparagine). Residues 64 to 212 (DGLTNAGNTT…AFQVDGGMVE (149 aa)) form the Cupin type-1 domain. Mn(2+) contacts are provided by His112, His114, Glu119, and His158. Residue Asn165 is glycosylated (N-linked (GlcNAc...) asparagine).

It belongs to the germin family. Oligomer (believed to be a pentamer but probably hexamer).

The protein localises to the secreted. It localises to the extracellular space. The protein resides in the apoplast. Functionally, may play a role in plant defense. Probably has no oxalate oxidase activity even if the active site is conserved. This chain is Putative germin-like protein 3-2, found in Oryza sativa subsp. japonica (Rice).